The chain runs to 734 residues: PI-PLC X-box domain-containing protein DDB_G0293730 (734 aa).

Positions 8–70 form a coiled coil; sequence IKNILLKIEK…ELNEKLIVEK (63 aa). The region spanning 440–604 is the PI-PLC X-box domain; the sequence is KLKDRKVRNL…CIYDDLVNPL (165 aa).

The chain is PI-PLC X-box domain-containing protein DDB_G0293730 from Dictyostelium discoideum (Social amoeba).